Here is a 230-residue protein sequence, read N- to C-terminus: 5'-methylthioadenosine/S-adenosylhomocysteine nucleosidase (230 aa).

Residue Glu-12 is the Proton acceptor of the active site. Substrate contacts are provided by residues Gly-78, Ile-153, and 174 to 175; that span reads ME. Asp-198 functions as the Proton donor in the catalytic mechanism.

This sequence belongs to the PNP/UDP phosphorylase family. MtnN subfamily.

The enzyme catalyses S-adenosyl-L-homocysteine + H2O = S-(5-deoxy-D-ribos-5-yl)-L-homocysteine + adenine. The catalysed reaction is S-methyl-5'-thioadenosine + H2O = 5-(methylsulfanyl)-D-ribose + adenine. It catalyses the reaction 5'-deoxyadenosine + H2O = 5-deoxy-D-ribose + adenine. It participates in amino-acid biosynthesis; L-methionine biosynthesis via salvage pathway; S-methyl-5-thio-alpha-D-ribose 1-phosphate from S-methyl-5'-thioadenosine (hydrolase route): step 1/2. In terms of biological role, catalyzes the irreversible cleavage of the glycosidic bond in both 5'-methylthioadenosine (MTA) and S-adenosylhomocysteine (SAH/AdoHcy) to adenine and the corresponding thioribose, 5'-methylthioribose and S-ribosylhomocysteine, respectively. Also cleaves 5'-deoxyadenosine, a toxic by-product of radical S-adenosylmethionine (SAM) enzymes, into 5-deoxyribose and adenine. The protein is 5'-methylthioadenosine/S-adenosylhomocysteine nucleosidase of Shewanella piezotolerans (strain WP3 / JCM 13877).